We begin with the raw amino-acid sequence, 453 residues long: Bifunctional protein GlmU (453 aa).

A pyrophosphorylase region spans residues 1–225 (MNIVILAAGT…DWETLGVNSK (225 aa)). UDP-N-acetyl-alpha-D-glucosamine is bound by residues 6-9 (LAAG), lysine 20, glutamine 71, 76-77 (GT), 98-100 (YGD), glycine 135, glutamate 150, asparagine 165, and asparagine 223. Residue aspartate 100 coordinates Mg(2+). Asparagine 223 provides a ligand contact to Mg(2+). A linker region spans residues 226-246 (AQLAELERIHQRNVADALLVE). The interval 247 to 453 (GVTLADPARV…GYVRPVKKKS (207 aa)) is N-acetyltransferase. Residues arginine 329 and lysine 347 each coordinate UDP-N-acetyl-alpha-D-glucosamine. Histidine 359 acts as the Proton acceptor in catalysis. Positions 362 and 373 each coordinate UDP-N-acetyl-alpha-D-glucosamine. Residues alanine 376, 382–383 (NY), serine 401, and alanine 419 contribute to the acetyl-CoA site.

In the N-terminal section; belongs to the N-acetylglucosamine-1-phosphate uridyltransferase family. It in the C-terminal section; belongs to the transferase hexapeptide repeat family. As to quaternary structure, homotrimer. Mg(2+) serves as cofactor.

Its subcellular location is the cytoplasm. The enzyme catalyses alpha-D-glucosamine 1-phosphate + acetyl-CoA = N-acetyl-alpha-D-glucosamine 1-phosphate + CoA + H(+). The catalysed reaction is N-acetyl-alpha-D-glucosamine 1-phosphate + UTP + H(+) = UDP-N-acetyl-alpha-D-glucosamine + diphosphate. It functions in the pathway nucleotide-sugar biosynthesis; UDP-N-acetyl-alpha-D-glucosamine biosynthesis; N-acetyl-alpha-D-glucosamine 1-phosphate from alpha-D-glucosamine 6-phosphate (route II): step 2/2. Its pathway is nucleotide-sugar biosynthesis; UDP-N-acetyl-alpha-D-glucosamine biosynthesis; UDP-N-acetyl-alpha-D-glucosamine from N-acetyl-alpha-D-glucosamine 1-phosphate: step 1/1. It participates in bacterial outer membrane biogenesis; LPS lipid A biosynthesis. Its function is as follows. Catalyzes the last two sequential reactions in the de novo biosynthetic pathway for UDP-N-acetylglucosamine (UDP-GlcNAc). The C-terminal domain catalyzes the transfer of acetyl group from acetyl coenzyme A to glucosamine-1-phosphate (GlcN-1-P) to produce N-acetylglucosamine-1-phosphate (GlcNAc-1-P), which is converted into UDP-GlcNAc by the transfer of uridine 5-monophosphate (from uridine 5-triphosphate), a reaction catalyzed by the N-terminal domain. This chain is Bifunctional protein GlmU, found in Burkholderia vietnamiensis (strain G4 / LMG 22486) (Burkholderia cepacia (strain R1808)).